Here is a 329-residue protein sequence, read N- to C-terminus: Ficolin-2 (329 aa).

The first 29 residues, 1 to 29 (MELGGAAGALGPSGPLLVCLCFGTLAAQA), serve as a signal peptide directing secretion. A Collagen-like domain is found at 52–111 (GCPGLPGAPGLKGETGAAGLKGERGLPGVPGKAGPAGPKGSTGAQGEKGARGEKGESGQL). A disordered region spans residues 64–113 (GETGAAGLKGERGLPGVPGKAGPAGPKGSTGAQGEKGARGEKGESGQLHS). Low complexity predominate over residues 77–90 (LPGVPGKAGPAGPK). The Fibrinogen C-terminal domain maps to 112-329 (HSCATGPRTC…KVSEMKLRLT (218 aa)). 2 disulfide bridges follow: Cys-114-Cys-142 and Cys-121-Cys-149. Asp-265, Asp-267, Ser-269, and Ser-271 together coordinate Ca(2+). Cysteines 273 and 286 form a disulfide. N-linked (GlcNAc...) asparagine glycosylation is present at Asn-316.

This sequence belongs to the ficolin lectin family. In terms of assembly, homotrimer. Interacts with elastin. Interacts with MASP1 and MASP2.

Its subcellular location is the secreted. May function in innate immunity through activation of the lectin complement pathway. Calcium-dependent and GlcNAc-binding lectin. The sequence is that of Ficolin-2 (FCN2) from Bos taurus (Bovine).